The sequence spans 1358 residues: DNA-directed RNA polymerase subunit beta (1358 aa).

It belongs to the RNA polymerase beta chain family. The RNAP catalytic core consists of 2 alpha, 1 beta, 1 beta' and 1 omega subunit. When a sigma factor is associated with the core the holoenzyme is formed, which can initiate transcription.

The enzyme catalyses RNA(n) + a ribonucleoside 5'-triphosphate = RNA(n+1) + diphosphate. In terms of biological role, DNA-dependent RNA polymerase catalyzes the transcription of DNA into RNA using the four ribonucleoside triphosphates as substrates. In Francisella tularensis subsp. tularensis (strain FSC 198), this protein is DNA-directed RNA polymerase subunit beta.